The following is a 185-amino-acid chain: Alkyl hydroperoxide reductase AhpD (185 aa).

Cys-132 serves as the catalytic Proton donor. A disulfide bridge connects residues Cys-132 and Cys-135. Residue Cys-135 is the Cysteine sulfenic acid (-SOH) intermediate of the active site.

The protein belongs to the AhpD family.

It carries out the reaction N(6)-[(R)-dihydrolipoyl]-L-lysyl-[lipoyl-carrier protein] + a hydroperoxide = N(6)-[(R)-lipoyl]-L-lysyl-[lipoyl-carrier protein] + an alcohol + H2O. Antioxidant protein with alkyl hydroperoxidase activity. Required for the reduction of the AhpC active site cysteine residues and for the regeneration of the AhpC enzyme activity. The protein is Alkyl hydroperoxide reductase AhpD of Anaeromyxobacter sp. (strain Fw109-5).